Consider the following 121-residue polypeptide: Large ribosomal subunit protein bL20 (121 aa).

Belongs to the bacterial ribosomal protein bL20 family.

Functionally, binds directly to 23S ribosomal RNA and is necessary for the in vitro assembly process of the 50S ribosomal subunit. It is not involved in the protein synthesizing functions of that subunit. In Methylorubrum extorquens (strain PA1) (Methylobacterium extorquens), this protein is Large ribosomal subunit protein bL20.